The chain runs to 610 residues: Anthocyanin regulatory Lc protein (610 aa).

Disordered regions lie at residues 402-422 (ATGAAQEMSGTGTKNHVMSER) and 468-524 (LESS…PVLT). The 50-residue stretch at 412–461 (TGTKNHVMSERKRREKLNEMFLVLKSLLPSIHRVNKASILAETIAYLKEL) folds into the bHLH domain. Residues 481–495 (TTTRLITRPSRGNNE) show a composition bias toward polar residues. The span at 508–519 (KSPELGRDDVER) shows a compositional bias: basic and acidic residues.

Belongs to the bHLH protein family. Efficient DNA binding requires dimerization with another bHLH protein.

The protein resides in the nucleus. Putative transcriptional activator. Controls tissue-specific synthesis of anthocyanin pigments in various parts of the maize plant. This Zea mays (Maize) protein is Anthocyanin regulatory Lc protein (LC).